The following is a 94-amino-acid chain: DNA-binding protein HU (94 aa).

The disordered stretch occupies residues 55–94 (RAERPGRNPKTGEPIMIAASNNPSFKPGKALKDAVKSSAG). Residues 84–94 (ALKDAVKSSAG) are compositionally biased toward basic and acidic residues.

Belongs to the bacterial histone-like protein family.

Functionally, histone-like DNA-binding protein which is capable of wrapping DNA to stabilize it, and thus to prevent its denaturation under extreme environmental conditions. This chain is DNA-binding protein HU (hup), found in Xylella fastidiosa (strain Temecula1 / ATCC 700964).